The following is a 397-amino-acid chain: Lymphoid enhancer-binding factor 1 (397 aa).

The CTNNB1-binding stretch occupies residues 1–60; the sequence is MPQLSGGGGGGDPELCATDEMIPFKDEGDPQKEKIFAEISHPEEEGDLADIKSSLVNESE. Lys25 participates in a covalent cross-link: Glycyl lysine isopeptide (Lys-Gly) (interchain with G-Cter in SUMO). Residues 59-102 form a disordered region; the sequence is SEIIPASNGHEVVRQAPSSQEPYHDKAREHPDEGKHPDGGLYNK. The span at 80 to 96 shows a compositional bias: basic and acidic residues; the sequence is PYHDKAREHPDEGKHPD. At Ser130 the chain carries Phosphoserine. At Thr153 the chain carries Phosphothreonine; by NLK. Ser164 bears the Phosphoserine; by NLK mark. Disordered regions lie at residues 164–191 and 266–296; these read SPGS…APEI and VKQE…KRPH. A Glycyl lysine isopeptide (Lys-Gly) (interchain with G-Cter in SUMO) cross-link involves residue Lys267. The span at 267–294 shows a compositional bias: basic and acidic residues; sequence KQEHPHTDSDLMHVKPQHEQRKEQEPKR. The segment at residues 297 to 365 is a DNA-binding region (HMG box); the sequence is IKKPLNAFML…LHMQLYPGWS (69 aa). Residues 367-397 are disordered; the sequence is RDNYGKKKKRKREKLQESTSGTGPRMTAAYI.

Belongs to the TCF/LEF family. In terms of assembly, binds the armadillo repeat of CTNNB1 and forms a stable complex. Binds TLE1, ALYREF/THOC4, MDFI and MDFIC. Interacts with NLK. Interacts with EP300 and PIASG. Interacts with DAZAP2. Phosphorylated at Thr-153 and/or Ser-164 by NLK. Phosphorylation by NLK at these sites represses LEF1-mediated transcriptional activation of target genes of the canonical Wnt signaling pathway. In terms of tissue distribution, expressed in Vgamma1.1 and Vgamma2 gamma-delta T-cells, however not expressed in gamma-delta thymocytes fated for Il17a expression (at protein level). Expressed in alpha-beta T-cell lineages. Expressed in the thymus. Found in distinct epithelial cell compartments of the skin and is abundant in the hair-producing progenitors of the follicle.

The protein resides in the nucleus. Functionally, transcription factor that binds DNA in a sequence-specific manner. Participates in the Wnt signaling pathway. Activates transcription of target genes in the presence of CTNNB1 and EP300. PIASG antagonizes both Wnt-dependent and Wnt-independent activation by LEF1. TLE1, TLE2, TLE3 and TLE4 repress transactivation mediated by LEF1 and CTNNB1. Regulates T-cell receptor alpha enhancer function. Required for IL17A expressing gamma-delta T-cell maturation and development, via binding to regulator loci of BLK to modulate expression. Acts as a positive regulator of odontoblast differentiation during mesenchymal tooth germ formation, expression is repressed during the bell stage by MSX1-mediated inhibition of CTNNB1 signaling. May play a role in hair cell differentiation and follicle morphogenesis. In Mus musculus (Mouse), this protein is Lymphoid enhancer-binding factor 1.